A 135-amino-acid chain; its full sequence is Histone H2A (135 aa).

Belongs to the histone H2A family. The nucleosome is a histone octamer containing two molecules each of H2A, H2B, H3 and H4 assembled in one H3-H4 heterotetramer and two H2A-H2B heterodimers. The octamer wraps approximately 147 bp of DNA.

It is found in the nucleus. Its subcellular location is the chromosome. Functionally, core component of nucleosome. Nucleosomes wrap and compact DNA into chromatin, limiting DNA accessibility to the cellular machineries which require DNA as a template. Histones thereby play a central role in transcription regulation, DNA repair, DNA replication and chromosomal stability. DNA accessibility is regulated via a complex set of post-translational modifications of histones, also called histone code, and nucleosome remodeling. The protein is Histone H2A of Trypanosoma cruzi.